The primary structure comprises 326 residues: Holliday junction branch migration complex subunit RuvB (326 aa).

The interval 1–180 (MRSISCSKEY…FGIPLRLEFY (180 aa)) is large ATPase domain (RuvB-L). ATP-binding positions include isoleucine 19, arginine 20, glycine 61, lysine 64, threonine 65, threonine 66, 127-129 (EDF), arginine 170, tyrosine 180, and arginine 217. Threonine 65 contacts Mg(2+). The interval 181 to 251 (SFEELVDIIK…IADSALSKLG (71 aa)) is small ATPAse domain (RuvB-S). Residues 254 to 326 (KMGLNKLDVD…QGKEYLSLQY (73 aa)) are head domain (RuvB-H). Residues arginine 307 and arginine 312 each contribute to the DNA site.

The protein belongs to the RuvB family. In terms of assembly, homohexamer. Forms an RuvA(8)-RuvB(12)-Holliday junction (HJ) complex. HJ DNA is sandwiched between 2 RuvA tetramers; dsDNA enters through RuvA and exits via RuvB. An RuvB hexamer assembles on each DNA strand where it exits the tetramer. Each RuvB hexamer is contacted by two RuvA subunits (via domain III) on 2 adjacent RuvB subunits; this complex drives branch migration. In the full resolvosome a probable DNA-RuvA(4)-RuvB(12)-RuvC(2) complex forms which resolves the HJ.

It localises to the cytoplasm. The enzyme catalyses ATP + H2O = ADP + phosphate + H(+). In terms of biological role, the RuvA-RuvB-RuvC complex processes Holliday junction (HJ) DNA during genetic recombination and DNA repair, while the RuvA-RuvB complex plays an important role in the rescue of blocked DNA replication forks via replication fork reversal (RFR). RuvA specifically binds to HJ cruciform DNA, conferring on it an open structure. The RuvB hexamer acts as an ATP-dependent pump, pulling dsDNA into and through the RuvAB complex. RuvB forms 2 homohexamers on either side of HJ DNA bound by 1 or 2 RuvA tetramers; 4 subunits per hexamer contact DNA at a time. Coordinated motions by a converter formed by DNA-disengaged RuvB subunits stimulates ATP hydrolysis and nucleotide exchange. Immobilization of the converter enables RuvB to convert the ATP-contained energy into a lever motion, pulling 2 nucleotides of DNA out of the RuvA tetramer per ATP hydrolyzed, thus driving DNA branch migration. The RuvB motors rotate together with the DNA substrate, which together with the progressing nucleotide cycle form the mechanistic basis for DNA recombination by continuous HJ branch migration. Branch migration allows RuvC to scan DNA until it finds its consensus sequence, where it cleaves and resolves cruciform DNA. The sequence is that of Holliday junction branch migration complex subunit RuvB from Wolbachia sp. subsp. Brugia malayi (strain TRS).